Consider the following 35-residue polypeptide: Tau/kappa-theraphotoxin-Pc1a (35 aa).

3 disulfide bridges follow: cysteine 3/cysteine 17, cysteine 10/cysteine 22, and cysteine 16/cysteine 29. Phenylalanine 35 is modified (phenylalanine amide).

It belongs to the neurotoxin 10 (Hwtx-1) family. 62 (Vatx) subfamily. In terms of tissue distribution, expressed by the venom gland.

It is found in the secreted. Functionally, selectively activates mammalian TRPV1, the capsaicin receptor, a non-selective cation channel expressed by sensory neurons of the pain pathway. Is less potent than VaTx2 and VaTx3. Interacts with distinct regions of the channel than capsaicin, since it only acts on the extracellular face of the channel, and capsaicin binds to the cytosolic side. Also activates avian TRPV1, which is insensitive to capsaicin. Significantly inhibits potassium channels Kv2.1/KCNB1. This chain is Tau/kappa-theraphotoxin-Pc1a, found in Psalmopoeus cambridgei (Trinidad chevron tarantula).